The sequence spans 464 residues: tRNA-2-methylthio-N(6)-dimethylallyladenosine synthase (464 aa).

The MTTase N-terminal domain occupies 19-135 (GSYWITTFGC…LENLLGKVDL (117 aa)). Residues Cys28, Cys64, Cys98, Cys170, Cys174, and Cys177 each coordinate [4Fe-4S] cluster. In terms of domain architecture, Radical SAM core spans 156 to 394 (RESSICGWVN…DLVEKTARSR (239 aa)). The TRAM domain maps to 396 to 464 (KRYINNIESV…PFSLTGELYL (69 aa)).

The protein belongs to the methylthiotransferase family. MiaB subfamily. Monomer. [4Fe-4S] cluster is required as a cofactor.

The protein localises to the cytoplasm. The enzyme catalyses N(6)-dimethylallyladenosine(37) in tRNA + (sulfur carrier)-SH + AH2 + 2 S-adenosyl-L-methionine = 2-methylsulfanyl-N(6)-dimethylallyladenosine(37) in tRNA + (sulfur carrier)-H + 5'-deoxyadenosine + L-methionine + A + S-adenosyl-L-homocysteine + 2 H(+). Catalyzes the methylthiolation of N6-(dimethylallyl)adenosine (i(6)A), leading to the formation of 2-methylthio-N6-(dimethylallyl)adenosine (ms(2)i(6)A) at position 37 in tRNAs that read codons beginning with uridine. The chain is tRNA-2-methylthio-N(6)-dimethylallyladenosine synthase from Prochlorococcus marinus (strain AS9601).